The chain runs to 134 residues: MTNIRKTHPLLKIINSSFVDLPAPSSLSSWWNFGSLLGVCLAVQILTGLFLAMHYTSDTATAFNSVTHICRDVNYGWLLRYLHANGASMFFICLYLHVGRGLYYGSYTYSETWNIGILLLFAVMATAFMGYVLP.

3 helical membrane passes run 33–53, 77–98, and 113–133; these read FGSL…FLAM, WLLR…YLHV, and WNIG…GYVL. Residues H83 and H97 each coordinate heme b.

This sequence belongs to the cytochrome b family. In terms of assembly, the cytochrome bc1 complex contains 11 subunits: 3 respiratory subunits (MT-CYB, CYC1 and UQCRFS1), 2 core proteins (UQCRC1 and UQCRC2) and 6 low-molecular weight proteins (UQCRH/QCR6, UQCRB/QCR7, UQCRQ/QCR8, UQCR10/QCR9, UQCR11/QCR10 and a cleavage product of UQCRFS1). This cytochrome bc1 complex then forms a dimer. It depends on heme b as a cofactor.

Its subcellular location is the mitochondrion inner membrane. Component of the ubiquinol-cytochrome c reductase complex (complex III or cytochrome b-c1 complex) that is part of the mitochondrial respiratory chain. The b-c1 complex mediates electron transfer from ubiquinol to cytochrome c. Contributes to the generation of a proton gradient across the mitochondrial membrane that is then used for ATP synthesis. The sequence is that of Cytochrome b (MT-CYB) from Chiroderma salvini (Salvin's big-eyed bat).